Reading from the N-terminus, the 1403-residue chain is Protein FAM135B (1403 aa).

4 disordered regions span residues glutamate 445–glutamate 483, glutamate 514–proline 548, arginine 648–alanine 669, and arginine 718–glycine 740. Over residues glutamate 649–alanine 661 the composition is skewed to basic and acidic residues. Residues threonine 731–glycine 740 show a composition bias toward polar residues. 2 positions are modified to phosphoserine: serine 775 and serine 776. The segment at threonine 790 to valine 819 is disordered. Residues lysine 802–tyrosine 814 are compositionally biased toward polar residues.

The protein belongs to the FAM135 family.

In Mus musculus (Mouse), this protein is Protein FAM135B (Fam135b).